The following is a 493-amino-acid chain: Activin receptor type-1C (493 aa).

Residues 1–20 (MTRALCSALRQALLLLAAAA) form the signal peptide. The Extracellular portion of the chain corresponds to 22–113 (LSPGLKCVCL…PNAPKLGPME (92 aa)). Residues 114–134 (LAIIITVPVCLLSIAAMLTVW) traverse the membrane as a helical segment. Residues 135–493 (ACQGRQCSYR…QLCVKEDCKA (359 aa)) lie on the Cytoplasmic side of the membrane. Residues 165-194 (KTLKDLIYDVTASGSGSGLPLLVQRTIART) form the GS domain. The Protein kinase domain maps to 195 to 485 (IVLQEIVGKG…LRIKKTISQL (291 aa)). Residues 201–209 (VGKGRFGEV) and Lys-222 each bind ATP. The active-site Proton acceptor is Asp-323.

The protein belongs to the protein kinase superfamily. TKL Ser/Thr protein kinase family. TGFB receptor subfamily. As to quaternary structure, binds the type 2 receptor protein ACVR2A. Requires Mg(2+) as cofactor. Mn(2+) serves as cofactor. As to expression, present in pancreas, heart, colon, small intestine, ovary and the hippocampus, medulla oblongata and putamen of the brain. Isoform 1, isoform 2, isoform 3 and isoform 4 are all expressed in the placenta throughout pregnancy.

The protein localises to the membrane. It catalyses the reaction L-threonyl-[receptor-protein] + ATP = O-phospho-L-threonyl-[receptor-protein] + ADP + H(+). The catalysed reaction is L-seryl-[receptor-protein] + ATP = O-phospho-L-seryl-[receptor-protein] + ADP + H(+). Serine/threonine protein kinase which forms a receptor complex on ligand binding. The receptor complex consists of 2 type II and 2 type I transmembrane serine/threonine kinases. Type II receptors phosphorylate and activate type I receptors which autophosphorylate, then bind and activate SMAD transcriptional regulators, SMAD2 and SMAD3. Receptor for activin AB, activin B, activin E and NODAL. Upon NODAL binding, activation results in increased apoptosis and reduced proliferation through suppression of AKT signaling and the activation of Smad2-dependent signaling pathway in pancreatic beta-cells, trophoblasts, epithelial or neuronal cells. Acts as a positive regulator for macrophage activation partially through down-regulation of PPARG expression. In Homo sapiens (Human), this protein is Activin receptor type-1C.